The chain runs to 149 residues: MLFSEIKFLIFMSVICLSSSHPILMLSSLILLTLFLSLIFYFIYQFSIMSMMMILIILGGMLIIFMYMISLCPNKKMSFYKKLSVTFTMMLILIPYDSFMTKLEMININKIYSVNFVNMIILMMIFLIVMLTIISKNLSWINAPIQKFN.

4 helical membrane-spanning segments follow: residues 23–43 (ILML…FYFI), 51–71 (MMMI…MISL), 83–103 (LSVT…MTKL), and 114–134 (VNFV…LTII).

It belongs to the complex I subunit 6 family.

The protein localises to the mitochondrion membrane. It catalyses the reaction a ubiquinone + NADH + 5 H(+)(in) = a ubiquinol + NAD(+) + 4 H(+)(out). Core subunit of the mitochondrial membrane respiratory chain NADH dehydrogenase (Complex I) that is believed to belong to the minimal assembly required for catalysis. Complex I functions in the transfer of electrons from NADH to the respiratory chain. The immediate electron acceptor for the enzyme is believed to be ubiquinone. The chain is NADH-ubiquinone oxidoreductase chain 6 (ND6) from Rhipicephalus sanguineus (Brown dog tick).